The primary structure comprises 311 residues: Aspartate carbamoyltransferase catalytic subunit (311 aa).

Carbamoyl phosphate is bound by residues Arg55 and Thr56. Lys85 provides a ligand contact to L-aspartate. Arg106, His135, and Gln138 together coordinate carbamoyl phosphate. The L-aspartate site is built by Arg168 and Arg230. 2 residues coordinate carbamoyl phosphate: Leu268 and Pro269.

Belongs to the aspartate/ornithine carbamoyltransferase superfamily. ATCase family. As to quaternary structure, heterododecamer (2C3:3R2) of six catalytic PyrB chains organized as two trimers (C3), and six regulatory PyrI chains organized as three dimers (R2).

It catalyses the reaction carbamoyl phosphate + L-aspartate = N-carbamoyl-L-aspartate + phosphate + H(+). It functions in the pathway pyrimidine metabolism; UMP biosynthesis via de novo pathway; (S)-dihydroorotate from bicarbonate: step 2/3. Catalyzes the condensation of carbamoyl phosphate and aspartate to form carbamoyl aspartate and inorganic phosphate, the committed step in the de novo pyrimidine nucleotide biosynthesis pathway. The sequence is that of Aspartate carbamoyltransferase catalytic subunit from Salmonella paratyphi A (strain AKU_12601).